A 229-amino-acid chain; its full sequence is Ras-related protein RABA6b (229 aa).

A GTP-binding site is contributed by 20–27 (GDSAVGKS). Residues 42–50 (SKPTIGVDF) carry the Effector region motif. GTP is bound by residues 68 to 72 (DTAGQ), 126 to 129 (NKSD), and 156 to 157 (SA). S-geranylgeranyl cysteine attachment occurs at residues Cys226 and Cys227.

This sequence belongs to the small GTPase superfamily. Rab family.

The protein localises to the cell membrane. Functionally, intracellular vesicle trafficking and protein transport. This chain is Ras-related protein RABA6b (RABA6B), found in Arabidopsis thaliana (Mouse-ear cress).